A 361-amino-acid polypeptide reads, in one-letter code: Probable lipid desaturase ADS3.2, chloroplastic (361 aa).

The N-terminal 57 residues, 1–57 (MMSLSTTLKPLSHFSPFVKRHNPKTNNTLFTLDTHNFTNSFWSKRGGSVSHRKHTVV), are a transit peptide targeting the chloroplast. The next 2 membrane-spanning stretches (helical) occupy residues 99-118 (LVIFVGTHLLSLLAPFYFSW) and 122-139 (WVFPWLVFINGICITLSY). Residues 140–145 (HRNLSH) carry the Histidine box-1 motif. A Histidine box-2 motif is present at residues 177–181 (HRYHH). Residues 246 to 266 (FLFYFCGGMPLLVWGIGITIA) form a helical membrane-spanning segment. Positions 309–313 (HNNHH) match the Histidine box-3 motif.

Belongs to the fatty acid desaturase type 1 family. Fe(2+) is required as a cofactor.

The protein resides in the plastid. It localises to the chloroplast membrane. It participates in lipid metabolism; polyunsaturated fatty acid biosynthesis. This Arabidopsis thaliana (Mouse-ear cress) protein is Probable lipid desaturase ADS3.2, chloroplastic.